A 336-amino-acid chain; its full sequence is Holliday junction branch migration complex subunit RuvB (336 aa).

The interval 4-184 is large ATPase domain (RuvB-L); the sequence is ADRLISAGTT…FGIVQRLEFY (181 aa). ATP contacts are provided by residues Ile23, Arg24, Gly65, Lys68, Thr69, Thr70, 131–133, Arg174, Tyr184, and Arg221; that span reads EDY. Thr69 contacts Mg(2+). A small ATPAse domain (RuvB-S) region spans residues 185–255; it reads QVPDLQYIVS…IAAQALDMLN (71 aa). The head domain (RuvB-H) stretch occupies residues 258–336; that stretch reads AEGFDYMDRK…HFGITPPEMP (79 aa). The DNA site is built by Arg294, Arg313, and Arg318.

It belongs to the RuvB family. In terms of assembly, homohexamer. Forms an RuvA(8)-RuvB(12)-Holliday junction (HJ) complex. HJ DNA is sandwiched between 2 RuvA tetramers; dsDNA enters through RuvA and exits via RuvB. An RuvB hexamer assembles on each DNA strand where it exits the tetramer. Each RuvB hexamer is contacted by two RuvA subunits (via domain III) on 2 adjacent RuvB subunits; this complex drives branch migration. In the full resolvosome a probable DNA-RuvA(4)-RuvB(12)-RuvC(2) complex forms which resolves the HJ.

It localises to the cytoplasm. The enzyme catalyses ATP + H2O = ADP + phosphate + H(+). The RuvA-RuvB-RuvC complex processes Holliday junction (HJ) DNA during genetic recombination and DNA repair, while the RuvA-RuvB complex plays an important role in the rescue of blocked DNA replication forks via replication fork reversal (RFR). RuvA specifically binds to HJ cruciform DNA, conferring on it an open structure. The RuvB hexamer acts as an ATP-dependent pump, pulling dsDNA into and through the RuvAB complex. RuvB forms 2 homohexamers on either side of HJ DNA bound by 1 or 2 RuvA tetramers; 4 subunits per hexamer contact DNA at a time. Coordinated motions by a converter formed by DNA-disengaged RuvB subunits stimulates ATP hydrolysis and nucleotide exchange. Immobilization of the converter enables RuvB to convert the ATP-contained energy into a lever motion, pulling 2 nucleotides of DNA out of the RuvA tetramer per ATP hydrolyzed, thus driving DNA branch migration. The RuvB motors rotate together with the DNA substrate, which together with the progressing nucleotide cycle form the mechanistic basis for DNA recombination by continuous HJ branch migration. Branch migration allows RuvC to scan DNA until it finds its consensus sequence, where it cleaves and resolves cruciform DNA. The chain is Holliday junction branch migration complex subunit RuvB from Escherichia coli (strain ATCC 8739 / DSM 1576 / NBRC 3972 / NCIMB 8545 / WDCM 00012 / Crooks).